The sequence spans 145 residues: Probable thioredoxin-2 (145 aa).

Residues 39-144 enclose the Thioredoxin domain; the sequence is VFDIDSVEDF…LDDFIEDVLA (106 aa). Catalysis depends on nucleophile residues Cys68 and Cys71. Cys68 and Cys71 are disulfide-bonded.

It belongs to the thioredoxin family.

Functionally, participates in various redox reactions through the reversible oxidation of its active center dithiol to a disulfide and catalyzes dithiol-disulfide exchange reactions. The polypeptide is Probable thioredoxin-2 (trx-2) (Caenorhabditis elegans).